We begin with the raw amino-acid sequence, 84 residues long: Neurotoxin BM10-1-like (84 aa).

An N-terminal signal peptide occupies residues 1-21 (MKTLLLTLVVVTIVCLDLGYT). 5 cysteine pairs are disulfide-bonded: cysteine 24-cysteine 47, cysteine 27-cysteine 32, cysteine 40-cysteine 64, cysteine 68-cysteine 76, and cysteine 77-cysteine 82.

Belongs to the three-finger toxin family. Ancestral subfamily. Orphan group IV sub-subfamily. As to expression, expressed by the venom gland.

Its subcellular location is the secreted. In terms of biological role, binds and inhibits muscular and neuronal nicotinic acetylcholine receptors (nAChR). The chain is Neurotoxin BM10-1-like from Bungarus multicinctus (Many-banded krait).